The sequence spans 231 residues: Phosphatidylserine decarboxylase proenzyme (231 aa).

Ser188 (schiff-base intermediate with substrate; via pyruvic acid) is an active-site residue. Ser188 is modified (pyruvic acid (Ser); by autocatalysis).

Belongs to the phosphatidylserine decarboxylase family. PSD-A subfamily. As to quaternary structure, heterodimer of a large membrane-associated beta subunit and a small pyruvoyl-containing alpha subunit. It depends on pyruvate as a cofactor. Is synthesized initially as an inactive proenzyme. Formation of the active enzyme involves a self-maturation process in which the active site pyruvoyl group is generated from an internal serine residue via an autocatalytic post-translational modification. Two non-identical subunits are generated from the proenzyme in this reaction, and the pyruvate is formed at the N-terminus of the alpha chain, which is derived from the carboxyl end of the proenzyme. The post-translation cleavage follows an unusual pathway, termed non-hydrolytic serinolysis, in which the side chain hydroxyl group of the serine supplies its oxygen atom to form the C-terminus of the beta chain, while the remainder of the serine residue undergoes an oxidative deamination to produce ammonia and the pyruvoyl prosthetic group on the alpha chain.

It localises to the cell membrane. It carries out the reaction a 1,2-diacyl-sn-glycero-3-phospho-L-serine + H(+) = a 1,2-diacyl-sn-glycero-3-phosphoethanolamine + CO2. It functions in the pathway phospholipid metabolism; phosphatidylethanolamine biosynthesis; phosphatidylethanolamine from CDP-diacylglycerol: step 2/2. Catalyzes the formation of phosphatidylethanolamine (PtdEtn) from phosphatidylserine (PtdSer). The sequence is that of Phosphatidylserine decarboxylase proenzyme from Rickettsia prowazekii (strain Madrid E).